Here is a 435-residue protein sequence, read N- to C-terminus: Chaperone SurA (435 aa).

The first 24 residues, 1–24 (MRLRSFAFLGFMLLVAMAPSMASA), serve as a signal peptide directing secretion. PpiC domains follow at residues 173-274 (DTAY…KLID) and 286-385 (VTEN…ELED).

The protein localises to the periplasm. The catalysed reaction is [protein]-peptidylproline (omega=180) = [protein]-peptidylproline (omega=0). Functionally, chaperone involved in the correct folding and assembly of outer membrane proteins. Recognizes specific patterns of aromatic residues and the orientation of their side chains, which are found more frequently in integral outer membrane proteins. May act in both early periplasmic and late outer membrane-associated steps of protein maturation. The sequence is that of Chaperone SurA from Chromohalobacter salexigens (strain ATCC BAA-138 / DSM 3043 / CIP 106854 / NCIMB 13768 / 1H11).